Consider the following 406-residue polypeptide: COP9 signalosome complex subunit 4 (406 aa).

Alanine 2 is modified (N-acetylalanine). An N6-acetyllysine modification is found at lysine 25. The region spanning 197–366 (YRRKFIEAAQ…GIVHFETREA (170 aa)) is the PCI domain.

This sequence belongs to the CSN4 family. As to quaternary structure, component of the CSN complex, composed of COPS1/GPS1, COPS2, COPS3, COPS4, COPS5, COPS6, COPS7 (COPS7A or COPS7B), COPS8 and COPS9. In the complex, it probably interacts directly with COPS1, COPS2, COPS3, COPS5, COPS6, COPS7 (COPS7A or COPS7B) and COPS8. Interacts with TOR1A; the interaction is direct and associates TOR1A and SNAPIN with the CSN complex. Interacts with STON2; controls STON2 neddylation levels. Interacts with ERCC6.

It localises to the cytoplasm. The protein resides in the nucleus. The protein localises to the cytoplasmic vesicle. Its subcellular location is the secretory vesicle. It is found in the synaptic vesicle. In terms of biological role, component of the COP9 signalosome complex (CSN), a complex involved in various cellular and developmental processes. The CSN complex is an essential regulator of the ubiquitin (Ubl) conjugation pathway by mediating the deneddylation of the cullin subunits of SCF-type E3 ligase complexes, leading to decrease the Ubl ligase activity of SCF-type complexes such as SCF, CSA or DDB2. Also involved in the deneddylation of non-cullin subunits such as STON2. The complex is also involved in phosphorylation of p53/TP53, c-jun/JUN, IkappaBalpha/NFKBIA, ITPK1, IRF8/ICSBP and SNAPIN, possibly via its association with CK2 and PKD kinases. CSN-dependent phosphorylation of TP53 and JUN promotes and protects degradation by the Ubl system, respectively. This Pongo abelii (Sumatran orangutan) protein is COP9 signalosome complex subunit 4 (COPS4).